The sequence spans 1240 residues: Structural polyprotein (1240 aa).

The segment at 1 to 35 (MFPYPTLNYPPMAPINPMAYRDPNPPRQVAPFRPP) is necessary for nucleocapsid assembly and virus assembly. Residues 1–102 (MFPYPTLNYP…RKPKPGKRQR (102 aa)) are disordered. Residues 23 to 34 (PNPPRQVAPFRP) are compositionally biased toward pro residues. Positions 36 to 69 (LAAQIEDLRRSIANLTLKQRAPNPPAGPPAKRKK) are host transcription inhibition. A Supraphysiological nuclear export signal motif is present at residues 43–50 (LRRSIANL). Asn49 carries an N-linked (GlcNAc...) asparagine; by host glycan. Residues 65 to 102 (AKRKKPAPKPKPAQAKKKRPPPPAKKQKRKPKPGKRQR) are compositionally biased toward basic residues. Positions 66 to 70 (KRKKP) match the Nuclear localization signal motif. The tract at residues 82–112 (KRPPPPAKKQKRKPKPGKRQRMCMKLESDKT) is binding to the viral RNA. Residues 97-111 (PGKRQRMCMKLESDK) form a ribosome-binding region. Ser109 carries the post-translational modification Phosphoserine. The Peptidase S3 domain occupies 111-260 (KTFPIMLNGQ…KDTPEGSEPW (150 aa)). Thr112 is subject to Phosphothreonine. Residues His137, Asp159, and Ser211 each act as charge relay system in the active site. The interval 261-272 (SLATVMCVLANI) is functions as an uncleaved signal peptide for the precursor of protein E3/E2. At 261–682 (SLATVMCVLA…HEVVVYYYNR (422 aa)) the chain is on the extracellular side. 2 N-linked (GlcNAc...) asparagine; by host glycosylation sites follow: Asn271 and Asn638. A helical transmembrane segment spans residues 683–703 (YPLTTIIGLCTCVAIIMVSCV). The Cytoplasmic portion of the chain corresponds to 704 to 743 (HPCGSFAGLRNLCITPYKLAPNAQVPILLALLCCIKPTRA). S-palmitoyl cysteine; by host attachment occurs at residues Cys706, Cys716, Cys736, and Cys737. The interval 715–735 (LCITPYKLAPNAQVPILLALL) is transient transmembrane before p62-6K protein processing. Over 744–758 (DDTLQVLNYLWNNNQ) the chain is Extracellular. A helical transmembrane segment spans residues 759–779 (NFFWMQTLIPLAALIVCMRIV). A topological domain (cytoplasmic) is located at residue Arg780. A helical transmembrane segment spans residues 781–801 (CLFCCGPAFLLVCGAWAAAYE). The Extracellular segment spans residues 802–1216 (HTAVMPNKVG…WSWLKVLVGG (415 aa)). Asn834 is a glycosylation site (N-linked (GlcNAc...) asparagine; by host). Disulfide bonds link Cys848/Cys913, Cys861/Cys893, Cys862/Cys895, and Cys867/Cys877. Positions 883 to 900 (VYPFMWGGAYCFCDTENT) are E1 fusion peptide loop. N-linked (GlcNAc...) asparagine; by host glycosylation is present at Asn933. 3 disulfide bridges follow: Cys1059/Cys1071, Cys1101/Cys1176, and Cys1106/Cys1180. A helical transmembrane segment spans residues 1217–1237 (TSAFIVLGLIATAVVALVLFF). Residues 1238–1240 (HRH) lie on the Cytoplasmic side of the membrane.

Part of a tetrameric complex composed of host CRM1, host importin alpha/beta dimer and the viral capsid; this complex blocks the receptor-mediated transport through the nuclear pore. Interacts with host phosphatase PPP1CA; this interaction dephosphorylates the capsid protein, which increases its ability to bind to the viral genome. Interacts with host karyopherin KPNA4; this interaction allows the nuclear import of the viral capsid protein. Interacts with spike glycoprotein E2. Interacts with host IRAK1; the interaction leads to inhibition of IRAK1-dependent signaling. In terms of assembly, the precursor of protein E3/E2 and E1 form a heterodimer shortly after synthesis. As to quaternary structure, the precursor of protein E3/E2 and E1 form a heterodimer shortly after synthesis. Processing of the precursor of protein E3/E2 into E2 and E3 results in a heterodimer of the spike glycoproteins E2 and E1. Spike at virion surface are constituted of three E2-E1 heterodimers. After target cell attachment and endocytosis, E1 change conformation to form homotrimers. Interacts with 6K protein. Processing of the precursor of protein E3/E2 into E2 and E3 results in a heterodimer of the spike glycoproteins E2 and E1. Spike at virion surface are constituted of three E2-E1 heterodimers. Interacts with 6K protein. In terms of assembly, interacts with spike glycoprotein E1. Interacts with spike glycoprotein E2. Post-translationally, structural polyprotein: Specific enzymatic cleavages in vivo yield mature proteins. Capsid protein is auto-cleaved during polyprotein translation, unmasking a signal peptide at the N-terminus of the precursor of E3/E2. The remaining polyprotein is then targeted to the host endoplasmic reticulum, where host signal peptidase cleaves it into pE2, 6K and E1 proteins. pE2 is further processed to mature E3 and E2 by host furin in trans-Golgi vesicle. Phosphorylated on serine and threonine residues. In terms of processing, palmitoylated via thioester bonds. These palmitoylations may induce disruption of the C-terminus transmembrane. This would result in the reorientation of E2 C-terminus from lumenal to cytoplasmic side. Post-translationally, N-glycosylated. Palmitoylated via thioester bonds.

Its subcellular location is the virion. It localises to the host cytoplasm. It is found in the host cell membrane. The protein resides in the host nucleus. The protein localises to the virion membrane. It catalyses the reaction Autocatalytic release of the core protein from the N-terminus of the togavirus structural polyprotein by hydrolysis of a -Trp-|-Ser- bond.. Functionally, forms an icosahedral capsid with a T=4 symmetry composed of 240 copies of the capsid protein surrounded by a lipid membrane through which penetrate 80 spikes composed of trimers of E1-E2 heterodimers. The capsid protein binds to the viral RNA genome at a site adjacent to a ribosome binding site for viral genome translation following genome release. Possesses a protease activity that results in its autocatalytic cleavage from the nascent structural protein. Following its self-cleavage, the capsid protein transiently associates with ribosomes, and within several minutes the protein binds to viral RNA and rapidly assembles into icosahedric core particles. The resulting nucleocapsid eventually associates with the cytoplasmic domain of the spike glycoprotein E2 at the cell membrane, leading to budding and formation of mature virions. In case of infection, new virions attach to target cells and after clathrin-mediated endocytosis their membrane fuses with the host endosomal membrane. This leads to the release of the nucleocapsid into the cytoplasm, followed by an uncoating event necessary for the genomic RNA to become accessible. The uncoating might be triggered by the interaction of capsid proteins with ribosomes. Binding of ribosomes would release the genomic RNA since the same region is genomic RNA-binding and ribosome-binding. Specifically inhibits interleukin-1 receptor-associated kinase 1/IRAK1-dependent signaling during viral entry, representing a means by which the alphaviruses may evade innate immune detection and activation prior to viral gene expression. Inhibits host transcription. Forms a tetrameric complex with XPO1/CRM1 and the nuclear import receptor importin. This complex blocks the central channel of host nuclear pores thereby inhibiting the receptor-mediated nuclear transport and thus the host mRNA and rRNA transcription. The inhibition of transcription is linked to a cytopathic effect on the host cell. Its function is as follows. Provides the signal sequence for the translocation of the precursor of protein E3/E2 to the host endoplasmic reticulum. Furin-cleaved E3 remains associated with spike glycoprotein E1 and mediates pH protection of the latter during the transport via the secretory pathway. After virion release from the host cell, the assembly protein E3 is gradually released in the extracellular space. In terms of biological role, plays a role in viral attachment to target host cell, by binding to the cell receptor. Synthesized as a p62 precursor which is processed by furin at the cell membrane just before virion budding, giving rise to E2-E1 heterodimer. The p62-E1 heterodimer is stable, whereas E2-E1 is unstable and dissociate at low pH. p62 is processed at the last step, presumably to avoid E1 fusion activation before its final export to cell surface. E2 C-terminus contains a transitory transmembrane that would be disrupted by palmitoylation, resulting in reorientation of the C-terminal tail from lumenal to cytoplasmic side. This step is critical since E2 C-terminus is involved in budding by interacting with capsid proteins. This release of E2 C-terminus in cytoplasm occurs lately in protein export, and precludes premature assembly of particles at the endoplasmic reticulum membrane. Constitutive membrane protein involved in virus glycoprotein processing, cell permeabilization, and the budding of viral particles. Disrupts the calcium homeostasis of the cell, probably at the endoplasmic reticulum level. This leads to cytoplasmic calcium elevation. Because of its lipophilic properties, the 6K protein is postulated to influence the selection of lipids that interact with the transmembrane domains of the glycoproteins, which, in turn, affects the deformability of the bilayer required for the extreme curvature that occurs as budding proceeds. Present in low amount in virions, about 3% compared to viral glycoproteins. Functionally, class II viral fusion protein. Fusion activity is inactive as long as E1 is bound to E2 in mature virion. After virus attachment to target cell and endocytosis, acidification of the endosome would induce dissociation of E1/E2 heterodimer and concomitant trimerization of the E1 subunits. This E1 trimer is fusion active, and promotes release of viral nucleocapsid in cytoplasm after endosome and viral membrane fusion. Efficient fusion requires the presence of cholesterol and sphingolipid in the target membrane. Fusion is optimal at levels of about 1 molecule of cholesterol per 2 molecules of phospholipids, and is specific for sterols containing a 3-beta-hydroxyl group. The protein is Structural polyprotein of Eastern equine encephalitis virus (strain va33[ten broeck]) (EEEV).